The following is a 141-amino-acid chain: Hemoglobin subunit alpha-A/A' (141 aa).

Positions 1 to 141 (VLSANDKTNV…VGNVLTAKYR (141 aa)) constitute a Globin domain. H58 contacts O2. Heme b is bound at residue H87.

The protein belongs to the globin family. As to quaternary structure, heterotetramer of two alpha chains and two beta chains. Red blood cells.

In terms of biological role, involved in oxygen transport from the lung to the various peripheral tissues. In Gyps rueppelli (Rueppell's griffon), this protein is Hemoglobin subunit alpha-A/A' (HBAA).